Here is a 392-residue protein sequence, read N- to C-terminus: ATP phosphoribosyltransferase regulatory subunit (392 aa).

The protein belongs to the class-II aminoacyl-tRNA synthetase family. HisZ subfamily. As to quaternary structure, heteromultimer composed of HisG and HisZ subunits.

It localises to the cytoplasm. It functions in the pathway amino-acid biosynthesis; L-histidine biosynthesis; L-histidine from 5-phospho-alpha-D-ribose 1-diphosphate: step 1/9. Required for the first step of histidine biosynthesis. May allow the feedback regulation of ATP phosphoribosyltransferase activity by histidine. The sequence is that of ATP phosphoribosyltransferase regulatory subunit from Prochlorococcus marinus (strain MIT 9303).